A 393-amino-acid polypeptide reads, in one-letter code: Bifunctional enzyme Fae/Hps (393 aa).

The segment at 1–161 (MYQIGEALVG…YEKDRGAHAV (161 aa)) is formaldehyde-activating enzyme. H17 functions as the Proton donor in the catalytic mechanism. Substrate is bound by residues D19, L48, K66, T68, and Q83. The segment at 162–393 (MGFKVQRLWD…IDQFRVMTDF (232 aa)) is 3-hexulose-6-phosphate synthase.

It in the N-terminal section; belongs to the formaldehyde-activating enzyme family. This sequence in the C-terminal section; belongs to the HPS/KGPDC family. HPS subfamily.

The enzyme catalyses 5,6,7,8-tetrahydromethanopterin + formaldehyde = 5,10-methylenetetrahydromethanopterin + H2O. The catalysed reaction is D-ribulose 5-phosphate + formaldehyde = D-arabino-hex-3-ulose 6-phosphate. It participates in carbohydrate biosynthesis; D-ribose 5-phosphate biosynthesis. Its function is as follows. Catalyzes the condensation of formaldehyde with tetrahydromethanopterin (H(4)MPT) to 5,10-methylenetetrahydromethanopterin. In terms of biological role, catalyzes the reversible formation of ribulose-5-phosphate and formaldehyde from 3-hexulose-6-phosphate. The protein is Bifunctional enzyme Fae/Hps of Methanosphaerula palustris (strain ATCC BAA-1556 / DSM 19958 / E1-9c).